A 176-amino-acid polypeptide reads, in one-letter code: Crossover junction endodeoxyribonuclease RuvC (176 aa).

Catalysis depends on residues Asp-10, Glu-69, and Asp-141. The Mg(2+) site is built by Asp-10, Glu-69, and Asp-141.

It belongs to the RuvC family. In terms of assembly, homodimer which binds Holliday junction (HJ) DNA. The HJ becomes 2-fold symmetrical on binding to RuvC with unstacked arms; it has a different conformation from HJ DNA in complex with RuvA. In the full resolvosome a probable DNA-RuvA(4)-RuvB(12)-RuvC(2) complex forms which resolves the HJ. Mg(2+) serves as cofactor.

Its subcellular location is the cytoplasm. It catalyses the reaction Endonucleolytic cleavage at a junction such as a reciprocal single-stranded crossover between two homologous DNA duplexes (Holliday junction).. In terms of biological role, the RuvA-RuvB-RuvC complex processes Holliday junction (HJ) DNA during genetic recombination and DNA repair. Endonuclease that resolves HJ intermediates. Cleaves cruciform DNA by making single-stranded nicks across the HJ at symmetrical positions within the homologous arms, yielding a 5'-phosphate and a 3'-hydroxyl group; requires a central core of homology in the junction. The consensus cleavage sequence is 5'-(A/T)TT(C/G)-3'. Cleavage occurs on the 3'-side of the TT dinucleotide at the point of strand exchange. HJ branch migration catalyzed by RuvA-RuvB allows RuvC to scan DNA until it finds its consensus sequence, where it cleaves and resolves the cruciform DNA. In Dichelobacter nodosus (strain VCS1703A), this protein is Crossover junction endodeoxyribonuclease RuvC.